The sequence spans 264 residues: Pyridoxine 5'-phosphate synthase (264 aa).

Asn28 serves as a coordination point for 3-amino-2-oxopropyl phosphate. Residue Asp30–His31 coordinates 1-deoxy-D-xylulose 5-phosphate. Position 39 (Arg39) interacts with 3-amino-2-oxopropyl phosphate. Residue His64 is the Proton acceptor of the active site. Arg66 and His71 together coordinate 1-deoxy-D-xylulose 5-phosphate. The active-site Proton acceptor is the Glu91. Thr121 is a binding site for 1-deoxy-D-xylulose 5-phosphate. The Proton donor role is filled by His217. Residues Gly218 and Gly239–His240 contribute to the 3-amino-2-oxopropyl phosphate site.

Belongs to the PNP synthase family. In terms of assembly, homooctamer; tetramer of dimers.

It localises to the cytoplasm. The catalysed reaction is 3-amino-2-oxopropyl phosphate + 1-deoxy-D-xylulose 5-phosphate = pyridoxine 5'-phosphate + phosphate + 2 H2O + H(+). It participates in cofactor biosynthesis; pyridoxine 5'-phosphate biosynthesis; pyridoxine 5'-phosphate from D-erythrose 4-phosphate: step 5/5. Catalyzes the complicated ring closure reaction between the two acyclic compounds 1-deoxy-D-xylulose-5-phosphate (DXP) and 3-amino-2-oxopropyl phosphate (1-amino-acetone-3-phosphate or AAP) to form pyridoxine 5'-phosphate (PNP) and inorganic phosphate. This is Pyridoxine 5'-phosphate synthase from Psychrobacter arcticus (strain DSM 17307 / VKM B-2377 / 273-4).